The sequence spans 251 residues: uncharacterized protein (251 aa).

Residues 1-19 (MRYLKRITIYISLLILVSG) form the signal peptide. C20 carries the N-palmitoyl cysteine lipid modification. The S-diacylglycerol cysteine moiety is linked to residue C20.

It belongs to the staphylococcal tandem lipoprotein family.

It is found in the cell membrane. This is an uncharacterized protein from Staphylococcus epidermidis (strain ATCC 12228 / FDA PCI 1200).